Here is a 323-residue protein sequence, read N- to C-terminus: tRNA (guanine(9)-N1)-methyltransferase (323 aa).

Residues 1 to 16 (MTEQTSEATVVNNSPA) show a composition bias toward polar residues. Disordered stretches follow at residues 1–34 (MTEQ…EIEE) and 192–215 (TGAP…NSTD). The span at 25-34 (EKPTPEEIEE) shows a compositional bias: basic and acidic residues. The SAM-dependent MTase TRM10-type domain occupies 99 to 319 (KAQPIPSRQI…KVLPPRKIKS (221 aa)). Low complexity predominate over residues 204-215 (GNSNSNTTNSTD). S-adenosyl-L-methionine is bound by residues 225–226 (LT), Gly245, 249–253 (DKNRH), Cys257, Leu271, and 283–285 (HVL). The active-site Proton acceptor is the Asp249.

It belongs to the class IV-like SAM-binding methyltransferase superfamily. TRM10 family. As to quaternary structure, monomer.

The protein localises to the cytoplasm. Its subcellular location is the nucleus. It carries out the reaction guanosine(9) in tRNA + S-adenosyl-L-methionine = N(1)-methylguanosine(9) in tRNA + S-adenosyl-L-homocysteine + H(+). Its function is as follows. S-adenosyl-L-methionine-dependent guanine N(1)-methyltransferase that catalyzes the formation of N(1)-methylguanine at position 9 (m1G9) in cytoplasmic tRNA. In Candida albicans (strain SC5314 / ATCC MYA-2876) (Yeast), this protein is tRNA (guanine(9)-N1)-methyltransferase.